Reading from the N-terminus, the 849-residue chain is DNA mismatch repair protein MutS (849 aa).

602–609 serves as a coordination point for ATP; it reads GPNMSGKS.

The protein belongs to the DNA mismatch repair MutS family.

Functionally, this protein is involved in the repair of mismatches in DNA. It is possible that it carries out the mismatch recognition step. This protein has a weak ATPase activity. The protein is DNA mismatch repair protein MutS of Streptococcus sanguinis (strain SK36).